A 365-amino-acid polypeptide reads, in one-letter code: Tubulin-like protein CetZ (365 aa).

Residues glutamine 10 to lysine 14, glycine 103 to glycine 105, glutamate 136, asparagine 163, and asparagine 181 each bind GTP.

The protein belongs to the CetZ family.

The protein localises to the cytoplasm. Involved in cell shape control. The protein is Tubulin-like protein CetZ of Pyrococcus abyssi (strain GE5 / Orsay).